A 340-amino-acid chain; its full sequence is Extracellular matrix protein-binding protein emp (340 aa).

The first 26 residues, 1–26 (MKKKLLVLTMSTLFATQLINSNHAKA), serve as a signal peptide directing secretion.

It is found in the cell surface. Functionally, adhesin that binds to the host cell extracellular matrix proteins fibronectin, fibrinogen, collagen, and vitronectin. The polypeptide is Extracellular matrix protein-binding protein emp (emp) (Staphylococcus aureus (strain Mu50 / ATCC 700699)).